The primary structure comprises 221 residues: Probable lipoprotein CT_734 (221 aa).

Residues Met1 to Ser24 form the signal peptide. Cys25 carries N-palmitoyl cysteine lipidation. The S-diacylglycerol cysteine moiety is linked to residue Cys25.

Belongs to the chlamydial CPn_0875/CT_734/TC_0107 family.

The protein localises to the cell membrane. This Chlamydia trachomatis serovar D (strain ATCC VR-885 / DSM 19411 / UW-3/Cx) protein is Probable lipoprotein CT_734.